The chain runs to 257 residues: MNPLVIKLGGVLLESDDAMKRLFEALVDYQKFYKRHVSVIHGGGRLIDNLMNKLSLPVKKKNGLRITPSEHINIITGALAGTANKTLLAWALKYNINAIGLCLADGGSIDVERLDENLGHVGKAIPGSPLFLKKLFKEGAIPIISSIGITKDGLLMNVNADLAATALATTLQANLILLSDISSILDGKGQRITEIDSIQAEKLIMQGIITNGMIVKVRAALEAARVLRRPVDIASWQNTEKLKLLFNGVNIGTRVYV.

Substrate is bound by residues 43–44 (GG), Arg-65, and Asn-157. ATP contacts are provided by residues 180 to 185 (DISSIL) and 208 to 210 (IIT).

It belongs to the acetylglutamate kinase family. ArgB subfamily. Homodimer.

It is found in the cytoplasm. The catalysed reaction is N-acetyl-L-glutamate + ATP = N-acetyl-L-glutamyl 5-phosphate + ADP. The protein operates within amino-acid biosynthesis; L-arginine biosynthesis; N(2)-acetyl-L-ornithine from L-glutamate: step 2/4. Functionally, catalyzes the ATP-dependent phosphorylation of N-acetyl-L-glutamate. The polypeptide is Acetylglutamate kinase (Buchnera aphidicola subsp. Acyrthosiphon pisum (strain Tuc7)).